The sequence spans 486 residues: Transcription factor bHLH49 (486 aa).

The span at 1–17 (MDLSAKDEFSAEKRNPD) shows a compositional bias: basic and acidic residues. 2 disordered regions span residues 1-30 (MDLS…GDWR) and 194-300 (KEST…KDGY). Polar residues-rich tracts occupy residues 198–221 (VRSS…TQSS) and 243–254 (QKNSEAAQSHRS). The segment covering 273-293 (QSPNSPGKKSNSGKQQGKQSS) has biased composition (low complexity). Positions 309–359 (QATNSHSLAERVRREKISERMKFLQDLVPGCNKVTGKAVMLDEIINYVQSL) constitute a bHLH domain.

Homodimer. Interacts with IBH1. Expressed constitutively in roots, stems, and flowers.

It is found in the nucleus. Functionally, transcriptional activator involved in cell elongation. Regulates the expression of a subset of genes involved in cell expansion by binding to the G-box motif. This Arabidopsis thaliana (Mouse-ear cress) protein is Transcription factor bHLH49 (BHLH49).